Consider the following 147-residue polypeptide: UPF0306 protein YhbP (147 aa).

The protein belongs to the UPF0306 family.

In Escherichia coli O157:H7, this protein is UPF0306 protein YhbP.